Here is a 634-residue protein sequence, read N- to C-terminus: 1-deoxy-D-xylulose-5-phosphate synthase (634 aa).

Thiamine diphosphate is bound by residues His-74 and 115 to 117; that span reads AHS. Asp-146 contributes to the Mg(2+) binding site. Thiamine diphosphate contacts are provided by residues 147–148, Asn-176, Tyr-283, and Glu-365; that span reads GA. Asn-176 lines the Mg(2+) pocket.

Belongs to the transketolase family. DXPS subfamily. As to quaternary structure, homodimer. It depends on Mg(2+) as a cofactor. Thiamine diphosphate serves as cofactor.

It catalyses the reaction D-glyceraldehyde 3-phosphate + pyruvate + H(+) = 1-deoxy-D-xylulose 5-phosphate + CO2. The protein operates within metabolic intermediate biosynthesis; 1-deoxy-D-xylulose 5-phosphate biosynthesis; 1-deoxy-D-xylulose 5-phosphate from D-glyceraldehyde 3-phosphate and pyruvate: step 1/1. Catalyzes the acyloin condensation reaction between C atoms 2 and 3 of pyruvate and glyceraldehyde 3-phosphate to yield 1-deoxy-D-xylulose-5-phosphate (DXP). This Burkholderia lata (strain ATCC 17760 / DSM 23089 / LMG 22485 / NCIMB 9086 / R18194 / 383) protein is 1-deoxy-D-xylulose-5-phosphate synthase.